Reading from the N-terminus, the 88-residue chain is Protein transport protein Sec61 subunit beta (88 aa).

The tract at residues 1–41 (MDSSVPGGQRTLQKRRNAQLQKEKKANQTPASPRQAGFGGS) is disordered. Residues 1-60 (MDSSVPGGQRTLQKRRNAQLQKEKKANQTPASPRQAGFGGSSSSILKLYTDEANGLRVDP) are Cytoplasmic-facing. A helical membrane pass occupies residues 61–81 (LVVLFLAVAFVFSVVALHVVA).

Belongs to the SEC61-beta family. As to quaternary structure, heterotrimeric complex composed of SEC61, SEB1 and SSS1.

It is found in the endoplasmic reticulum membrane. Necessary for protein translocation in the endoplasmic reticulum. In Kluyveromyces lactis (strain ATCC 8585 / CBS 2359 / DSM 70799 / NBRC 1267 / NRRL Y-1140 / WM37) (Yeast), this protein is Protein transport protein Sec61 subunit beta (SBH1).